Here is a 198-residue protein sequence, read N- to C-terminus: Pyridoxal 5'-phosphate synthase subunit PdxT (198 aa).

49–51 (GES) contributes to the L-glutamine binding site. The active-site Nucleophile is cysteine 81. Residues arginine 113 and 141–142 (IR) each bind L-glutamine. Residues histidine 177 and glutamate 179 each act as charge relay system in the active site.

The protein belongs to the glutaminase PdxT/SNO family. In terms of assembly, in the presence of PdxS, forms a dodecamer of heterodimers. Only shows activity in the heterodimer.

It carries out the reaction aldehydo-D-ribose 5-phosphate + D-glyceraldehyde 3-phosphate + L-glutamine = pyridoxal 5'-phosphate + L-glutamate + phosphate + 3 H2O + H(+). The catalysed reaction is L-glutamine + H2O = L-glutamate + NH4(+). It participates in cofactor biosynthesis; pyridoxal 5'-phosphate biosynthesis. In terms of biological role, catalyzes the hydrolysis of glutamine to glutamate and ammonia as part of the biosynthesis of pyridoxal 5'-phosphate. The resulting ammonia molecule is channeled to the active site of PdxS. In Mycobacterium avium (strain 104), this protein is Pyridoxal 5'-phosphate synthase subunit PdxT.